Consider the following 216-residue polypeptide: Sarcospan (216 aa).

Over 1–26 (MGRKPSPRAQELPEEEARTCCGCRFP) the chain is Cytoplasmic. Residues 27 to 47 (LLLALLQLALGIAVTVLGFLM) form a helical membrane-spanning segment. At 48 to 59 (ASISPSLLVRDT) the chain is on the extracellular side. The chain crosses the membrane as a helical span at residues 60 to 80 (PFWAGSIVCVVAYLGLFMLCV). The Cytoplasmic segment spans residues 81–95 (SYQVDERTCVQFSMK). Residues 96 to 116 (VFYFLLSALGLMVCMLAVAFA) form a helical membrane-spanning segment. Over 117-166 (AHHYSLLAQFTCETSLDSCQCKLPSSEPLSRAFVYRDVTDCTSVTGTFKL) the chain is Extracellular. The helical transmembrane segment at 167-187 (FLIIQMVLNLVCGLVCLLACF) threads the bilayer. At 188–216 (VMWKHRYQVFYVGVGLRSLMASDGQLPKA) the chain is on the cytoplasmic side.

It localises to the cell membrane. The protein localises to the sarcolemma. The protein resides in the postsynaptic cell membrane. In terms of biological role, component of the dystrophin-glycoprotein complex (DGC), a complex that spans the muscle plasma membrane and forms a link between the F-actin cytoskeleton and the extracellular matrix. Preferentially associates with the sarcoglycan subcomplex of the DGC. The polypeptide is Sarcospan (Sspn) (Mus musculus (Mouse)).